A 170-amino-acid chain; its full sequence is Cyclic pyranopterin monophosphate synthase (170 aa).

Residues Leu-75–His-77 and Met-113–Glu-114 each bind substrate. The active site involves Asp-128.

This sequence belongs to the MoaC family. Homohexamer; trimer of dimers.

It catalyses the reaction (8S)-3',8-cyclo-7,8-dihydroguanosine 5'-triphosphate = cyclic pyranopterin phosphate + diphosphate. Its pathway is cofactor biosynthesis; molybdopterin biosynthesis. In terms of biological role, catalyzes the conversion of (8S)-3',8-cyclo-7,8-dihydroguanosine 5'-triphosphate to cyclic pyranopterin monophosphate (cPMP). This is Cyclic pyranopterin monophosphate synthase from Pelotomaculum thermopropionicum (strain DSM 13744 / JCM 10971 / SI).